A 148-amino-acid chain; its full sequence is Basic leucine zipper 4 (148 aa).

The region spanning 48 to 97 (DDKKRRRTISNRESAKRSRMKKKKRFEELTEEVNRLNIRNQELKNRLANV) is the bZIP domain. The segment at 50 to 70 (KKRRRTISNRESAKRSRMKKK) is disordered. Residues 50–72 (KKRRRTISNRESAKRSRMKKKKR) are basic motif. The interval 76–90 (LTEEVNRLNIRNQEL) is leucine-zipper.

The protein localises to the nucleus. Functionally, probable transcription factor involved in somatic embryogenesis. Acts as a positive regulator of BHLH109. In Arabidopsis thaliana (Mouse-ear cress), this protein is Basic leucine zipper 4.